A 682-amino-acid polypeptide reads, in one-letter code: Potassium-transporting ATPase ATP-binding subunit (682 aa).

5 helical membrane-spanning segments follow: residues 15–35 (AALF…AKLA), 42–62 (SPVM…TASG), 66–86 (AGFG…GNFA), 233–253 (LTFL…GVTL), and 257–277 (LLIA…LPAI). D310 functions as the 4-aspartylphosphate intermediate in the catalytic mechanism. Residues D347, E351, 377 to 384 (FTAQTRMS), and K395 each bind ATP. Mg(2+) is bound by residues D518 and D522. The next 3 membrane-spanning stretches (helical) occupy residues 588-608 (FAIL…LNVM), 616-636 (AVLA…PLAL), and 662-682 (VLLP…VLGA).

Belongs to the cation transport ATPase (P-type) (TC 3.A.3) family. Type IA subfamily. The system is composed of three essential subunits: KdpA, KdpB and KdpC.

The protein resides in the cell inner membrane. The enzyme catalyses K(+)(out) + ATP + H2O = K(+)(in) + ADP + phosphate + H(+). Functionally, part of the high-affinity ATP-driven potassium transport (or Kdp) system, which catalyzes the hydrolysis of ATP coupled with the electrogenic transport of potassium into the cytoplasm. This subunit is responsible for energy coupling to the transport system and for the release of the potassium ions to the cytoplasm. The sequence is that of Potassium-transporting ATPase ATP-binding subunit from Xanthomonas axonopodis pv. citri (strain 306).